Here is a 101-residue protein sequence, read N- to C-terminus: Large ribosomal subunit protein uL24 (101 aa).

It belongs to the universal ribosomal protein uL24 family. Part of the 50S ribosomal subunit.

In terms of biological role, one of two assembly initiator proteins, it binds directly to the 5'-end of the 23S rRNA, where it nucleates assembly of the 50S subunit. One of the proteins that surrounds the polypeptide exit tunnel on the outside of the subunit. The sequence is that of Large ribosomal subunit protein uL24 from Paracoccus denitrificans (strain Pd 1222).